A 218-amino-acid chain; its full sequence is Zinc finger CCHC-type and RNA-binding motif-containing protein 1 (218 aa).

The RRM domain maps to 10–88 (STVYVSNLPF…RAIKASIAKD (79 aa)). Residues 105–122 (SRCYECGDTGHLSYACPK) form a CCHC-type zinc finger. The disordered stretch occupies residues 119–218 (ACPKNMLGER…YFSDEDELSD (100 aa)). The stretch at 132 to 188 (QKKEKKKRKRLVEEEEEEVVEEEESEDEGEDPALDSLSQAIAFQQARIDEEKNKYRH) forms a coiled coil. The span at 144–164 (EEEEEEVVEEEESEDEGEDPA) shows a compositional bias: acidic residues. Residues 178-201 (RIDEEKNKYRHDPAEASTSEDSRR) are compositionally biased toward basic and acidic residues.

Component of the U11/U12 snRNPs that are part of the U12-type spliceosome.

It is found in the nucleus. This Xenopus laevis (African clawed frog) protein is Zinc finger CCHC-type and RNA-binding motif-containing protein 1 (zcrb1).